The primary structure comprises 231 residues: MAAAEMERTTSFDAAEKLKAADAGGGEVDDELEEGEIVEESNDTASYLGKEITVKHPLEHSWTFWFDSPIAKSRQTAWGSSLRNVYTFSTVEDFWGAYNNIHHPSKLVMGADFHCFKHKIEPKWEDPVCANGGTWKMSFLKGKSDTSWLYTLLAMIGHQFDHGDEICGAVVSVRSKGEKIALWTKNAANETAQVSIGKQWKQFLDHSDSVGFIFHDDAKRLDRSAKNRYTV.

A compositionally biased stretch (basic and acidic residues) spans M1 to A20. The interval M1 to E36 is disordered. Residues E27 to E36 are compositionally biased toward acidic residues. EIF4G-binding stretches follow at residues H56–E59 and F66–H102. MRNA-binding positions include R74 to G79, K106, and W124 to E125. C129 and C167 are disulfide-bonded. Residues Y150–Q159 are EIF4G-binding. MRNA-binding positions include R174–K179 and K219–R223.

Belongs to the eukaryotic initiation factor 4E family. As to quaternary structure, EIF4F is a multi-subunit complex, the composition of which varies with external and internal environmental conditions. It is composed of at least EIF4A, EIF4E and EIF4G. EIF4E is also known to interact with other partners. In higher plants two isoforms of EIF4F have been identified, named isoform EIF4F and isoform EIF(iso)4F. Isoform EIF4F has subunits p220 and p26, whereas isoform EIF(iso)4F has subunits p82 and p28. In terms of assembly, (Microbial infection) Interacts with viral genome-linked protein (VPg); this interaction is possible in susceptible hosts but impaired in resistant plants. In terms of processing, according to the redox status, the Cys-129-Cys-167 disulfide bridge may have a role in regulating protein function by affecting its ability to bind capped mRNA.

The protein resides in the nucleus. It is found in the cytoplasm. Its function is as follows. Component of the protein complex eIF4F, which is involved in the recognition of the mRNA cap, ATP-dependent unwinding of 5'-terminal secondary structure and recruitment of mRNA to the ribosome. Recognizes and binds the 7-methylguanosine-containing mRNA cap during an early step in the initiation of protein synthesis and facilitates ribosome binding by inducing the unwinding of the mRNAs secondary structures. Key component of recessive resistance to potyviruses. (Microbial infection) Susceptibility host factor required for viral infection (e.g. Potato virus Y (PVY)) by recruiting viral RNAs to the host ribosomal complex via an interaction with viral genome-linked protein (VPg). In Solanum tuberosum (Potato), this protein is Eukaryotic translation initiation factor 4E allele A.